The sequence spans 1795 residues: Protein TIC 214 (1795 aa).

A run of 6 helical transmembrane segments spans residues 19 to 39, 68 to 88, 91 to 111, 133 to 153, 176 to 196, and 227 to 247; these read IINS…FSIG, FIAG…HLAL, PHTI…WNNH, VFLN…SSML, VGWL…LVWI, and IFSI…PSPI. Residues 1490–1517 are disordered; it reads EKESTGQVEFESDKEQQRNSESALSNQE. Polar residues predominate over residues 1508-1517; that stretch reads NSESALSNQE.

It belongs to the TIC214 family. Part of the Tic complex.

Its subcellular location is the plastid. It is found in the chloroplast inner membrane. Functionally, involved in protein precursor import into chloroplasts. May be part of an intermediate translocation complex acting as a protein-conducting channel at the inner envelope. The sequence is that of Protein TIC 214 from Crucihimalaya wallichii (Rock-cress).